A 263-amino-acid polypeptide reads, in one-letter code: SPRY domain-containing SOCS box protein 2 (263 aa).

The segment covering 1-16 has biased composition (polar residues); the sequence is MGQTALAGGSSSTPTP. A disordered region spans residues 1–48; it reads MGQTALAGGSSSTPTPQALYPDLSCPEGLEELLSAPPPDLGAQRRHGW. In terms of domain architecture, B30.2/SPRY spans 26–221; that stretch reads PEGLEELLSA…VRIRYLGERR (196 aa). Residues 222 to 263 form the SOCS box domain; it reads AEPHSLLHLSRLCVRHNLGDTRLGQVSALPLPPAMKRYLLYQ.

Belongs to the SPSB family. In terms of assembly, component of the probable ECS(SPSB2) E3 ubiquitin-protein ligase complex which contains CUL5, RNF7/RBX2, Elongin BC complex and SPSB2. Interacts with CUL5, RNF7, ELOB and ELOC. Interacts with MET. Interacts (via B30.2/SPRY domain) with PAWR; this interaction occurs in association with the Elongin BC complex. Interacts with NOS2. (Microbial infection) Interacts (via C-terminus) with HCV envelope glycoprotein E1. Interacts (via C-terminus) with HCV non-structural protein 5A; this interaction targets NS5A for ubiquitination and degradation.

It is found in the cytoplasm. It localises to the cytosol. It participates in protein modification; protein ubiquitination. In terms of biological role, substrate recognition component of a SCF-like ECS (Elongin BC-CUL2/5-SOCS-box protein) E3 ubiquitin-protein ligase complex which mediates the ubiquitination and subsequent proteasomal degradation of target proteins. Negatively regulates nitric oxide (NO) production and limits cellular toxicity in activated macrophages by mediating the ubiquitination and proteasomal degradation of NOS2. Acts as a bridge which links NOS2 with the ECS E3 ubiquitin ligase complex components ELOC and CUL5. This Homo sapiens (Human) protein is SPRY domain-containing SOCS box protein 2 (SPSB2).